The chain runs to 356 residues: Dual-specificity RNA methyltransferase RlmN (356 aa).

Glu-92 (proton acceptor) is an active-site residue. Positions 98 to 327 (EKNRGTLCIS…HQGIRTMTRR (230 aa)) constitute a Radical SAM core domain. The cysteines at positions 105 and 337 are disulfide-linked. Residues Cys-112, Cys-116, and Cys-119 each coordinate [4Fe-4S] cluster. S-adenosyl-L-methionine-binding positions include 162 to 163 (GE), Ser-194, 216 to 218 (SLH), and Asn-294. Residue Cys-337 is the S-methylcysteine intermediate of the active site.

It belongs to the radical SAM superfamily. RlmN family. The cofactor is [4Fe-4S] cluster.

It is found in the cytoplasm. It carries out the reaction adenosine(2503) in 23S rRNA + 2 reduced [2Fe-2S]-[ferredoxin] + 2 S-adenosyl-L-methionine = 2-methyladenosine(2503) in 23S rRNA + 5'-deoxyadenosine + L-methionine + 2 oxidized [2Fe-2S]-[ferredoxin] + S-adenosyl-L-homocysteine. The catalysed reaction is adenosine(37) in tRNA + 2 reduced [2Fe-2S]-[ferredoxin] + 2 S-adenosyl-L-methionine = 2-methyladenosine(37) in tRNA + 5'-deoxyadenosine + L-methionine + 2 oxidized [2Fe-2S]-[ferredoxin] + S-adenosyl-L-homocysteine. In terms of biological role, specifically methylates position 2 of adenine 2503 in 23S rRNA and position 2 of adenine 37 in tRNAs. m2A2503 modification seems to play a crucial role in the proofreading step occurring at the peptidyl transferase center and thus would serve to optimize ribosomal fidelity. The sequence is that of Dual-specificity RNA methyltransferase RlmN from Ruthia magnifica subsp. Calyptogena magnifica.